A 747-amino-acid polypeptide reads, in one-letter code: Polyribonucleotide nucleotidyltransferase (747 aa).

Asp-487 and Asp-493 together coordinate Mg(2+). Residues 554-613 enclose the KH domain; that stretch reads PSTTTIKIDKDKIRDIIGPGGKVIKEICETSGAKIDISDDGSVSVYASDRDKLKVALDKI. The S1 motif domain occupies 623–691; the sequence is GEIFNGTVMK…NKGKAKLTIK (69 aa). Residues 691-747 form a disordered region; the sequence is KNADKDKSSNNPKPKNNVNNAKENSEPERRDSSKKRAWNEDSNNDKEEAITERKYFN. Residues 699–712 show a composition bias toward low complexity; it reads SNNPKPKNNVNNAK. Residues 727 to 747 are compositionally biased toward basic and acidic residues; that stretch reads AWNEDSNNDKEEAITERKYFN.

Belongs to the polyribonucleotide nucleotidyltransferase family. Requires Mg(2+) as cofactor.

It is found in the cytoplasm. It catalyses the reaction RNA(n+1) + phosphate = RNA(n) + a ribonucleoside 5'-diphosphate. In terms of biological role, involved in mRNA degradation. Catalyzes the phosphorolysis of single-stranded polyribonucleotides processively in the 3'- to 5'-direction. This chain is Polyribonucleotide nucleotidyltransferase, found in Rickettsia felis (strain ATCC VR-1525 / URRWXCal2) (Rickettsia azadi).